Here is an 803-residue protein sequence, read N- to C-terminus: Leucine--tRNA ligase (803 aa).

Residues 40-51 (PYPSGAGLHVGH) carry the 'HIGH' region motif. The 'KMSKS' region signature appears at 575–579 (KMSKS). Residue lysine 578 participates in ATP binding.

Belongs to the class-I aminoacyl-tRNA synthetase family.

It localises to the cytoplasm. It catalyses the reaction tRNA(Leu) + L-leucine + ATP = L-leucyl-tRNA(Leu) + AMP + diphosphate. This Listeria innocua serovar 6a (strain ATCC BAA-680 / CLIP 11262) protein is Leucine--tRNA ligase.